Consider the following 65-residue polypeptide: Large ribosomal subunit protein bL35 (65 aa).

Belongs to the bacterial ribosomal protein bL35 family.

The chain is Large ribosomal subunit protein bL35 from Thermoanaerobacter pseudethanolicus (strain ATCC 33223 / 39E) (Clostridium thermohydrosulfuricum).